The sequence spans 161 residues: 2-C-methyl-D-erythritol 2,4-cyclodiphosphate synthase (161 aa).

A divalent metal cation-binding residues include Asp10 and His12. 4-CDP-2-C-methyl-D-erythritol 2-phosphate-binding positions include 10 to 12 (DVH) and 36 to 37 (HS). His44 lines the a divalent metal cation pocket. 4-CDP-2-C-methyl-D-erythritol 2-phosphate is bound by residues 58–60 (DIG), 63–67 (FSDTD), and Arg144.

It belongs to the IspF family. In terms of assembly, homotrimer. A divalent metal cation is required as a cofactor.

It carries out the reaction 4-CDP-2-C-methyl-D-erythritol 2-phosphate = 2-C-methyl-D-erythritol 2,4-cyclic diphosphate + CMP. It functions in the pathway isoprenoid biosynthesis; isopentenyl diphosphate biosynthesis via DXP pathway; isopentenyl diphosphate from 1-deoxy-D-xylulose 5-phosphate: step 4/6. In terms of biological role, involved in the biosynthesis of isopentenyl diphosphate (IPP) and dimethylallyl diphosphate (DMAPP), two major building blocks of isoprenoid compounds. Catalyzes the conversion of 4-diphosphocytidyl-2-C-methyl-D-erythritol 2-phosphate (CDP-ME2P) to 2-C-methyl-D-erythritol 2,4-cyclodiphosphate (ME-CPP) with a corresponding release of cytidine 5-monophosphate (CMP). The chain is 2-C-methyl-D-erythritol 2,4-cyclodiphosphate synthase from Burkholderia ambifaria (strain MC40-6).